A 116-amino-acid polypeptide reads, in one-letter code: Large ribosomal subunit protein bL20 (116 aa).

Belongs to the bacterial ribosomal protein bL20 family.

In terms of biological role, binds directly to 23S ribosomal RNA and is necessary for the in vitro assembly process of the 50S ribosomal subunit. It is not involved in the protein synthesizing functions of that subunit. This is Large ribosomal subunit protein bL20 from Helicobacter pylori (strain P12).